Reading from the N-terminus, the 421-residue chain is MTVAEVKGTFKLVCLGCRVNQYEVQAYRDQLTILGYQEVLDSEIPADLCIINTCAVTASAESSGRHAVRQLCRQNPTAHIVVTGCLGESDKEFFASLDRQCTLVSNKEKSRLIEKIFSYDTTFPEFKIHSFEGKSRAFIKVQDGCNSFCSYCIIPYLRGRSVSRPAEKILAEIAGVVDQGYREVVIAGINVGDYCDGERSLASLIEQVDQIPGIERIRISSIDPDDITEDLHRAITSSRHTCPSSHLVLQSGSNSILKRMNRKYSRGDFLDCVEKFRASDPRYAFTTDVIVGFPGESDQDFEDTLRIIEDVGFIKVHSFPFSARRRTKAYTFDNQIPNQVIYERKKYLAEVAKRVGQKEMMKRLGETTEVLVEKVTGQVATGHSPYFEKVSFPVVGTVAINTLVSVRLDRVEEEGLIGEIV.

In terms of domain architecture, MTTase N-terminal spans 8-121 (GTFKLVCLGC…LIEKIFSYDT (114 aa)). Residues Cys-17, Cys-54, Cys-85, Cys-145, Cys-149, and Cys-152 each coordinate [4Fe-4S] cluster. Residues 131–358 (FEGKSRAFIK…AEVAKRVGQK (228 aa)) form the Radical SAM core domain.

The protein belongs to the methylthiotransferase family. MtaB subfamily. [4Fe-4S] cluster serves as cofactor.

The protein resides in the cytoplasm. It catalyses the reaction N(6)-L-threonylcarbamoyladenosine(37) in tRNA + (sulfur carrier)-SH + AH2 + 2 S-adenosyl-L-methionine = 2-methylsulfanyl-N(6)-L-threonylcarbamoyladenosine(37) in tRNA + (sulfur carrier)-H + 5'-deoxyadenosine + L-methionine + A + S-adenosyl-L-homocysteine + 2 H(+). In terms of biological role, catalyzes the methylthiolation of N6-threonylcarbamoyladenosine (t(6)A), leading to the formation of 2-methylthio-N6-threonylcarbamoyladenosine (ms(2)t(6)A) at position 37 in tRNAs that read codons beginning with adenine. The polypeptide is Threonylcarbamoyladenosine tRNA methylthiotransferase MtaB (mtaB) (Chlamydia pneumoniae (Chlamydophila pneumoniae)).